The following is a 672-amino-acid chain: DNA ligase (672 aa).

Residues 32 to 36, 81 to 82, and Glu113 each bind NAD(+); these read DAEYD and SL. Lys115 functions as the N6-AMP-lysine intermediate in the catalytic mechanism. Arg136, Glu173, Lys290, and Lys314 together coordinate NAD(+). Residues Cys408, Cys411, Cys426, and Cys432 each contribute to the Zn(2+) site. The BRCT domain occupies 594–672; the sequence is EIDSPFAGKT…EAEMLRLLGE (79 aa).

The protein belongs to the NAD-dependent DNA ligase family. LigA subfamily. It depends on Mg(2+) as a cofactor. Requires Mn(2+) as cofactor.

It carries out the reaction NAD(+) + (deoxyribonucleotide)n-3'-hydroxyl + 5'-phospho-(deoxyribonucleotide)m = (deoxyribonucleotide)n+m + AMP + beta-nicotinamide D-nucleotide.. Its function is as follows. DNA ligase that catalyzes the formation of phosphodiester linkages between 5'-phosphoryl and 3'-hydroxyl groups in double-stranded DNA using NAD as a coenzyme and as the energy source for the reaction. It is essential for DNA replication and repair of damaged DNA. In Cronobacter sakazakii (strain ATCC BAA-894) (Enterobacter sakazakii), this protein is DNA ligase.